Consider the following 107-residue polypeptide: Toluene 1,2-dioxygenase system ferredoxin subunit (107 aa).

The Rieske domain occupies 4–99 (TYILRQGDLP…IKVEGDEVHV (96 aa)). Residues cysteine 43, histidine 45, cysteine 62, and histidine 65 each contribute to the [2Fe-2S] cluster site.

Belongs to the bacterial ring-hydroxylating dioxygenase ferredoxin component family. This dioxygenase system consists of four proteins: the two subunits of the hydroxylase component (todC1 and todC2), a ferredoxin (TodB) and a ferredoxin reductase (TodA).

Its pathway is xenobiotic degradation; toluene degradation. This protein seems to be a 2Fe-2S ferredoxin. This Pseudomonas putida (strain ATCC 700007 / DSM 6899 / JCM 31910 / BCRC 17059 / LMG 24140 / F1) protein is Toluene 1,2-dioxygenase system ferredoxin subunit (todB).